Reading from the N-terminus, the 160-residue chain is Major pollen allergen Bet v 1-G (160 aa).

Positions 55, 82, 84, and 101 each coordinate brassinolide.

The protein belongs to the BetVI family.

The protein localises to the cytoplasm. Functionally, may be a general steroid carrier protein. This Betula pendula (European white birch) protein is Major pollen allergen Bet v 1-G (BETV1G).